The chain runs to 321 residues: Beta-ketoacyl-[acyl-carrier-protein] synthase III (321 aa).

Catalysis depends on residues Cys-116 and His-248. Positions 249–253 are ACP-binding; it reads QANLR. Asn-278 is a catalytic residue.

Belongs to the thiolase-like superfamily. FabH family. In terms of assembly, homodimer.

It is found in the cytoplasm. The enzyme catalyses malonyl-[ACP] + acetyl-CoA + H(+) = 3-oxobutanoyl-[ACP] + CO2 + CoA. Its pathway is lipid metabolism; fatty acid biosynthesis. Its function is as follows. Catalyzes the condensation reaction of fatty acid synthesis by the addition to an acyl acceptor of two carbons from malonyl-ACP. Catalyzes the first condensation reaction which initiates fatty acid synthesis and may therefore play a role in governing the total rate of fatty acid production. Possesses both acetoacetyl-ACP synthase and acetyl transacylase activities. Its substrate specificity determines the biosynthesis of branched-chain and/or straight-chain of fatty acids. The chain is Beta-ketoacyl-[acyl-carrier-protein] synthase III from Yersinia enterocolitica serotype O:8 / biotype 1B (strain NCTC 13174 / 8081).